The chain runs to 165 residues: 2-C-methyl-D-erythritol 2,4-cyclodiphosphate synthase (165 aa).

A divalent metal cation is bound by residues D12 and H14. 4-CDP-2-C-methyl-D-erythritol 2-phosphate-binding positions include 12–14 and 38–39; these read DIH and HS. Residue H46 coordinates a divalent metal cation. Residues 60–62, 136–139, and R146 each bind 4-CDP-2-C-methyl-D-erythritol 2-phosphate; these read DIG and TTNE.

It belongs to the IspF family. In terms of assembly, homotrimer. It depends on a divalent metal cation as a cofactor.

The enzyme catalyses 4-CDP-2-C-methyl-D-erythritol 2-phosphate = 2-C-methyl-D-erythritol 2,4-cyclic diphosphate + CMP. It functions in the pathway isoprenoid biosynthesis; isopentenyl diphosphate biosynthesis via DXP pathway; isopentenyl diphosphate from 1-deoxy-D-xylulose 5-phosphate: step 4/6. Involved in the biosynthesis of isopentenyl diphosphate (IPP) and dimethylallyl diphosphate (DMAPP), two major building blocks of isoprenoid compounds. Catalyzes the conversion of 4-diphosphocytidyl-2-C-methyl-D-erythritol 2-phosphate (CDP-ME2P) to 2-C-methyl-D-erythritol 2,4-cyclodiphosphate (ME-CPP) with a corresponding release of cytidine 5-monophosphate (CMP). This Nostoc sp. (strain PCC 7120 / SAG 25.82 / UTEX 2576) protein is 2-C-methyl-D-erythritol 2,4-cyclodiphosphate synthase.